Reading from the N-terminus, the 571-residue chain is Sulfite reductase [NADPH] hemoprotein beta-component (571 aa).

4 residues coordinate [4Fe-4S] cluster: C436, C442, C481, and C485. C485 lines the siroheme pocket.

This sequence belongs to the nitrite and sulfite reductase 4Fe-4S domain family. As to quaternary structure, alpha(8)-beta(8). The alpha component is a flavoprotein, the beta component is a hemoprotein. Siroheme serves as cofactor. Requires [4Fe-4S] cluster as cofactor.

It catalyses the reaction hydrogen sulfide + 3 NADP(+) + 3 H2O = sulfite + 3 NADPH + 4 H(+). It functions in the pathway sulfur metabolism; hydrogen sulfide biosynthesis; hydrogen sulfide from sulfite (NADPH route): step 1/1. Functionally, component of the sulfite reductase complex that catalyzes the 6-electron reduction of sulfite to sulfide. This is one of several activities required for the biosynthesis of L-cysteine from sulfate. This is Sulfite reductase [NADPH] hemoprotein beta-component (cysI) from Bacillus subtilis (strain 168).